The sequence spans 424 residues: GTPase Obg (424 aa).

Residues 1 to 158 (MFVDRARIYI…LWVILELKLL (158 aa)) enclose the Obg domain. The OBG-type G domain maps to 159–330 (ADVGLIGFPN…LIYYAAQKLK (172 aa)). GTP is bound by residues 165-172 (GFPNVGKS), 190-194 (FTTIN), 212-215 (DIPG), 282-285 (NKMD), and 311-313 (SAA). Ser172 and Thr192 together coordinate Mg(2+). Residues 347 to 424 (YTAVEEEPFN…MYDLEFEYFR (78 aa)) form the OCT domain.

Belongs to the TRAFAC class OBG-HflX-like GTPase superfamily. OBG GTPase family. As to quaternary structure, monomer. It depends on Mg(2+) as a cofactor.

It localises to the cytoplasm. Its function is as follows. An essential GTPase which binds GTP, GDP and possibly (p)ppGpp with moderate affinity, with high nucleotide exchange rates and a fairly low GTP hydrolysis rate. Plays a role in control of the cell cycle, stress response, ribosome biogenesis and in those bacteria that undergo differentiation, in morphogenesis control. The sequence is that of GTPase Obg from Acetivibrio thermocellus (strain ATCC 27405 / DSM 1237 / JCM 9322 / NBRC 103400 / NCIMB 10682 / NRRL B-4536 / VPI 7372) (Clostridium thermocellum).